Reading from the N-terminus, the 418-residue chain is Arrestin domain-containing protein 4 (418 aa).

Short sequence motifs (PPxY motif) lie at residues 350-353 and 395-398; these read PPNY and PPLY.

It belongs to the arrestin family. Interacts with ADRB2. Interacts (via PPxY motifs) with ITCH, NEDD4L and WWP2. Interacts with AVPR2. Identified in a complex containing at least ARRDC4, AVPR2 and HGS. Interacts with SLC11A2; controls the incorporation of SLC11A2 into extracellular vesicles through an ubiquitination-dependent mechanism. Interacts with TRIM65.

It localises to the early endosome. Its subcellular location is the cell membrane. It is found in the cytoplasmic vesicle. Functions as an adapter recruiting ubiquitin-protein ligases to their specific substrates. Plays a role in endocytosis of activated G protein-coupled receptors (GPCRs). Through an ubiquitination-dependent mechanism also plays a role in the incorporation of SLC11A2 into extracellular vesicles. May play a role in glucose uptake. Participates in innate immune response by promoting IFIH1/MDA5 activation through interaction with TRIM65. The sequence is that of Arrestin domain-containing protein 4 (ARRDC4) from Homo sapiens (Human).